Here is a 433-residue protein sequence, read N- to C-terminus: Shufflon protein C' (433 aa).

Residues 1-361 (MKKYDRGWAS…TGAILSCQSG (361 aa)) are constant region. Residues 362–433 (RWSGGNKINY…HVDAYCCPFN (72 aa)) form a variable region region.

The sequence is that of Shufflon protein C' from Escherichia coli.